The following is a 137-amino-acid chain: Putative pre-16S rRNA nuclease (137 aa).

Belongs to the YqgF nuclease family.

It is found in the cytoplasm. Could be a nuclease involved in processing of the 5'-end of pre-16S rRNA. This chain is Putative pre-16S rRNA nuclease, found in Bacillus cereus (strain G9842).